Here is a 307-residue protein sequence, read N- to C-terminus: Zygote arrest protein 2.L (307 aa).

The segment at 138-200 is disordered; it reads LPQGGRLPKK…EEPGNEEQTK (63 aa). Residues 156–186 are compositionally biased toward basic and acidic residues; sequence LKERAPSPEDKEREKVSEKEPDTKDELEKRP. The 3CxxC-type zinc finger occupies 208–293; it reads QKYGYFHCKD…QELCGRCKNK (86 aa).

It belongs to the ZAR1 family. As to expression, expressed in oocytes.

It is found in the cytoplasm. It localises to the cytoplasmic ribonucleoprotein granule. Functionally, mRNA-binding protein required for maternal mRNA storage, translation and degradation during oocyte maturation. Probably promotes formation of some phase-separated membraneless compartment that stores maternal mRNAs in oocytes: acts by undergoing liquid-liquid phase separation upon binding to maternal mRNAs. Binds to the 3'-UTR of maternal mRNAs, inhibiting their translation. The protein is Zygote arrest protein 2.L (zar2.L) of Xenopus laevis (African clawed frog).